A 171-amino-acid chain; its full sequence is MLSHLIIGASGLYLGDMLFIGISFIVLMALISVVAWKPITKMMADRADKIANDIDSAQKSRQEASDLADQRRDALSHSRAEASEIVADAKKSGEKQRSSIVADAQNEATQYKQNARKDIEQERQDALKNVQSDVADISVAIATKIIKKQLDPEGQQALINSYIEGLGKHES.

Residues L14–V34 traverse the membrane as a helical segment. A compositionally biased stretch (basic and acidic residues) spans S56–R97. The tract at residues S56–A104 is disordered.

Belongs to the ATPase B chain family. F-type ATPases have 2 components, F(1) - the catalytic core - and F(0) - the membrane proton channel. F(1) has five subunits: alpha(3), beta(3), gamma(1), delta(1), epsilon(1). F(0) has three main subunits: a(1), b(2) and c(10-14). The alpha and beta chains form an alternating ring which encloses part of the gamma chain. F(1) is attached to F(0) by a central stalk formed by the gamma and epsilon chains, while a peripheral stalk is formed by the delta and b chains.

It is found in the cell membrane. Its function is as follows. F(1)F(0) ATP synthase produces ATP from ADP in the presence of a proton or sodium gradient. F-type ATPases consist of two structural domains, F(1) containing the extramembraneous catalytic core and F(0) containing the membrane proton channel, linked together by a central stalk and a peripheral stalk. During catalysis, ATP synthesis in the catalytic domain of F(1) is coupled via a rotary mechanism of the central stalk subunits to proton translocation. In terms of biological role, component of the F(0) channel, it forms part of the peripheral stalk, linking F(1) to F(0). The sequence is that of ATP synthase subunit b from Lactiplantibacillus plantarum (strain ATCC BAA-793 / NCIMB 8826 / WCFS1) (Lactobacillus plantarum).